Reading from the N-terminus, the 463-residue chain is Retinoic acid receptor RXR-gamma (463 aa).

A modulating region spans residues 1-138 (MYGNYSHFMK…TSPGSLVKHI (138 aa)). The interval 17–53 (GSPGHSGSTSMSPSAALSTGKPMDSHPSYTDTPVSAP) is disordered. A compositionally biased stretch (polar residues) spans 21–33 (HSGSTSMSPSAAL). NR C4-type zinc fingers lie at residues 139 to 159 (CAICGDRSSGKHYGVYSCEGC) and 175 to 199 (CRDNKDCLIDKRQRNRCQYCRYQKC). Residues 139–204 (CAICGDRSSG…RYQKCLVMGM (66 aa)) constitute a DNA-binding region (nuclear receptor). Positions 205-230 (KREAVQEERQRSRERAESEAECASSG) are hinge. Residues 211–222 (EERQRSRERAES) are compositionally biased toward basic and acidic residues. Residues 211-232 (EERQRSRERAESEAECASSGHE) are disordered. One can recognise an NR LBD domain in the interval 231 to 459 (HEDMPVERIL…TFLMEMLETP (229 aa)).

This sequence belongs to the nuclear hormone receptor family. NR2 subfamily. Homodimer. Heterodimer with a RAR molecule. Binds DNA preferentially as a RAR/RXR heterodimer. Interacts with RARA. In terms of processing, acetylated by EP300.

The protein localises to the nucleus. It localises to the cytoplasm. In terms of biological role, receptor for retinoic acid. Retinoic acid receptors bind as heterodimers to their target response elements in response to their ligands, all-trans or 9-cis retinoic acid, and regulate gene expression in various biological processes. The RAR/RXR heterodimers bind to the retinoic acid response elements (RARE) composed of tandem 5'-AGGTCA-3' sites known as DR1-DR5. The high affinity ligand for RXRs is 9-cis retinoic acid. This chain is Retinoic acid receptor RXR-gamma (RXRG), found in Sus scrofa (Pig).